The sequence spans 406 residues: Tyrosine--tRNA ligase (406 aa).

Y35 contributes to the L-tyrosine binding site. The 'HIGH' region signature appears at 40-49; that stretch reads PTADSLHVGH. Positions 168 and 172 each coordinate L-tyrosine. A 'KMSKS' region motif is present at residues 228 to 232; sequence KMGKT. K231 contacts ATP. The 65-residue stretch at 340-404 folds into the S4 RNA-binding domain; the sequence is SELLDILVEA…RGKKNYNKIV (65 aa).

It belongs to the class-I aminoacyl-tRNA synthetase family. TyrS type 1 subfamily. As to quaternary structure, homodimer.

Its subcellular location is the cytoplasm. The enzyme catalyses tRNA(Tyr) + L-tyrosine + ATP = L-tyrosyl-tRNA(Tyr) + AMP + diphosphate + H(+). In terms of biological role, catalyzes the attachment of tyrosine to tRNA(Tyr) in a two-step reaction: tyrosine is first activated by ATP to form Tyr-AMP and then transferred to the acceptor end of tRNA(Tyr). The protein is Tyrosine--tRNA ligase of Clostridium perfringens (strain SM101 / Type A).